The following is a 109-amino-acid chain: Small ribosomal subunit protein uS15c (109 aa).

The protein belongs to the universal ribosomal protein uS15 family. In terms of assembly, part of the 30S ribosomal subunit.

The protein localises to the plastid. Its subcellular location is the chloroplast. The polypeptide is Small ribosomal subunit protein uS15c (rps15-A) (Trachelium caeruleum (Blue throatwort)).